The primary structure comprises 418 residues: NADH-quinone oxidoreductase subunit D (418 aa).

The protein belongs to the complex I 49 kDa subunit family. In terms of assembly, NDH-1 is composed of 14 different subunits. Subunits NuoB, C, D, E, F, and G constitute the peripheral sector of the complex.

Its subcellular location is the cell inner membrane. It catalyses the reaction a quinone + NADH + 5 H(+)(in) = a quinol + NAD(+) + 4 H(+)(out). Functionally, NDH-1 shuttles electrons from NADH, via FMN and iron-sulfur (Fe-S) centers, to quinones in the respiratory chain. The immediate electron acceptor for the enzyme in this species is believed to be ubiquinone. Couples the redox reaction to proton translocation (for every two electrons transferred, four hydrogen ions are translocated across the cytoplasmic membrane), and thus conserves the redox energy in a proton gradient. The polypeptide is NADH-quinone oxidoreductase subunit D (Neisseria meningitidis serogroup C / serotype 2a (strain ATCC 700532 / DSM 15464 / FAM18)).